Here is a 135-residue protein sequence, read N- to C-terminus: Small ribosomal subunit protein uS12 (135 aa).

3-methylthioaspartic acid is present on aspartate 89. The segment at 114–135 is disordered; sequence RSRYGAKKGAAKQAAAAKSKKK. Positions 124–135 are enriched in low complexity; the sequence is AKQAAAAKSKKK.

It belongs to the universal ribosomal protein uS12 family. In terms of assembly, part of the 30S ribosomal subunit. Contacts proteins S8 and S17. May interact with IF1 in the 30S initiation complex.

Its function is as follows. With S4 and S5 plays an important role in translational accuracy. In terms of biological role, interacts with and stabilizes bases of the 16S rRNA that are involved in tRNA selection in the A site and with the mRNA backbone. Located at the interface of the 30S and 50S subunits, it traverses the body of the 30S subunit contacting proteins on the other side and probably holding the rRNA structure together. The combined cluster of proteins S8, S12 and S17 appears to hold together the shoulder and platform of the 30S subunit. The sequence is that of Small ribosomal subunit protein uS12 from Amoebophilus asiaticus (strain 5a2).